We begin with the raw amino-acid sequence, 195 residues long: Pyruvoyl-dependent arginine decarboxylase AaxB (195 aa).

Position 53 is a pyruvic acid (Ser) (S53).

Belongs to the pyruvoyl-dependent arginine decarboxylase family. As to quaternary structure, trimer of an alpha-beta dimer. The cofactor is pyruvate.

Its subcellular location is the cytoplasm. The catalysed reaction is L-arginine + H(+) = agmatine + CO2. In terms of biological role, part of the AaxABC system, catalyzes the decarboxylation of L-arginine. The arginine uptake by the bacterium in the macrophage may be a virulence factor against the host innate immune response. The polypeptide is Pyruvoyl-dependent arginine decarboxylase AaxB (aaxB) (Chlamydia abortus (strain DSM 27085 / S26/3) (Chlamydophila abortus)).